Here is an 85-residue protein sequence, read N- to C-terminus: DNA-directed RNA polymerase subunit omega (85 aa).

This sequence belongs to the RNA polymerase subunit omega family. As to quaternary structure, the RNAP catalytic core consists of 2 alpha, 1 beta, 1 beta' and 1 omega subunit. When a sigma factor is associated with the core the holoenzyme is formed, which can initiate transcription.

It catalyses the reaction RNA(n) + a ribonucleoside 5'-triphosphate = RNA(n+1) + diphosphate. Promotes RNA polymerase assembly. Latches the N- and C-terminal regions of the beta' subunit thereby facilitating its interaction with the beta and alpha subunits. The polypeptide is DNA-directed RNA polymerase subunit omega (Tropheryma whipplei (strain TW08/27) (Whipple's bacillus)).